Reading from the N-terminus, the 440-residue chain is Nuclear hormone receptor family member nhr-130 (440 aa).

The segment at residues 34-110 (LYTCQVCALP…VGMDPGRFQF (77 aa)) is a DNA-binding region (nuclear receptor). 2 NR C4-type zinc fingers span residues 37–57 (CQVC…CRAC) and 74–93 (CKKQ…CKKC). Residues 184–439 (EKPLIARNNL…FSHPEMFEDT (256 aa)) enclose the NR LBD domain.

The protein belongs to the nuclear hormone receptor family.

It localises to the nucleus. Orphan nuclear receptor. The chain is Nuclear hormone receptor family member nhr-130 (nhr-130) from Caenorhabditis elegans.